A 388-amino-acid polypeptide reads, in one-letter code: Na(+)/H(+) antiporter NhaA (388 aa).

11 consecutive transmembrane segments (helical) span residues 14-34 (GGII…SGFT), 59-79 (MLLW…GLEV), 95-115 (AFPV…YLAF), 125-145 (GWAI…ALLG), 154-174 (IFLM…IALF), 179-199 (LSMV…VLNL), 219-239 (VLKS…FIPL), 254-274 (VLHP…NAGV), 287-307 (ILPL…ISLF), 328-348 (IMAV…IASL), and 356-376 (ALIN…AVIG).

Belongs to the NhaA Na(+)/H(+) (TC 2.A.33) antiporter family.

Its subcellular location is the cell inner membrane. The catalysed reaction is Na(+)(in) + 2 H(+)(out) = Na(+)(out) + 2 H(+)(in). In terms of biological role, na(+)/H(+) antiporter that extrudes sodium in exchange for external protons. The protein is Na(+)/H(+) antiporter NhaA of Citrobacter koseri (strain ATCC BAA-895 / CDC 4225-83 / SGSC4696).